The chain runs to 388 residues: MKDCEYQQISPGAAPLPASPGARRPGPAASPTPGPGPAPPAAPAPPRWSSSGSGSGSGSGSLGRRPRRKWEVFPGRNRFYCGGRLMLAGHGGVFALTLLLILTTTGLFFVFDCPYLARKLTLAIPIIAAILFFFVMSCLLQTSFTDPGILPRATVCEAAALEKQIDNTGSSTYRPPPRTREVLINGQMVKLKYCFTCKMFRPPRTSHCSVCDNCVERFDHHCPWVGNCVGRRNYRFFYAFILSLSFLTAFIFACVVTHLTLRAQGSNFLSTLKETPASVLELVICFFSIWSILGLSGFHTYLVASNLTTNEDIKGSWSSKRGGEASVNPYSHKSIITNCCAVLCGPLPPSLIDRRGFVQSDTVLPSPIRSDEPACRAKPDASMVGGHP.

A disordered region spans residues 1 to 67 (MKDCEYQQIS…GSGSLGRRPR (67 aa)). Residues 1–90 (MKDCEYQQIS…CGGRLMLAGH (90 aa)) are Cytoplasmic-facing. Residues 10 to 27 (SPGAAPLPASPGARRPGP) are compositionally biased toward low complexity. Residue S19 is modified to Phosphoserine. The span at 28-46 (AASPTPGPGPAPPAAPAPP) shows a compositional bias: pro residues. Residues 91-111 (GGVFALTLLLILTTTGLFFVF) form a helical membrane-spanning segment. Residues 112-119 (DCPYLARK) lie on the Lumenal side of the membrane. The chain crosses the membrane as a helical span at residues 120 to 140 (LTLAIPIIAAILFFFVMSCLL). Residues 141-235 (QTSFTDPGIL…GNCVGRRNYR (95 aa)) lie on the Cytoplasmic side of the membrane. A DHHC domain is found at 192–242 (KYCFTCKMFRPPRTSHCSVCDNCVERFDHHCPWVGNCVGRRNYRFFYAFIL). The active-site S-palmitoyl cysteine intermediate is C222. The helical transmembrane segment at 236-256 (FFYAFILSLSFLTAFIFACVV) threads the bilayer. Topologically, residues 257–277 (THLTLRAQGSNFLSTLKETPA) are lumenal. Residues 278–298 (SVLELVICFFSIWSILGLSGF) form a helical membrane-spanning segment. At 299–388 (HTYLVASNLT…PDASMVGGHP (90 aa)) the chain is on the cytoplasmic side. The disordered stretch occupies residues 364-388 (LPSPIRSDEPACRAKPDASMVGGHP). Over residues 369–379 (RSDEPACRAKP) the composition is skewed to basic and acidic residues.

The protein belongs to the DHHC palmitoyltransferase family. ERF2/ZDHHC9 subfamily. In terms of tissue distribution, widely expressed.

The protein resides in the golgi apparatus membrane. It catalyses the reaction L-cysteinyl-[protein] + hexadecanoyl-CoA = S-hexadecanoyl-L-cysteinyl-[protein] + CoA. Functionally, palmitoyltransferase that catalyzes the addition of palmitate onto various protein substrates, such as CGAS, HRAS and LCK. Acts as a negative regulator of the cGAS-STING pathway be mediating palmitoylation and inactivation of CGAS. May also have a palmitoyltransferase activity toward the beta-2 adrenergic receptor/ADRB2 and therefore regulate G protein-coupled receptor signaling. This Homo sapiens (Human) protein is Palmitoyltransferase ZDHHC18.